The chain runs to 185 residues: Probable nicotinate-nucleotide adenylyltransferase (185 aa).

The protein belongs to the NadD family.

It carries out the reaction nicotinate beta-D-ribonucleotide + ATP + H(+) = deamido-NAD(+) + diphosphate. It functions in the pathway cofactor biosynthesis; NAD(+) biosynthesis; deamido-NAD(+) from nicotinate D-ribonucleotide: step 1/1. Catalyzes the reversible adenylation of nicotinate mononucleotide (NaMN) to nicotinic acid adenine dinucleotide (NaAD). The sequence is that of Probable nicotinate-nucleotide adenylyltransferase from Methylorubrum extorquens (strain PA1) (Methylobacterium extorquens).